An 86-amino-acid chain; its full sequence is Cell division topological specificity factor (86 aa).

It belongs to the MinE family.

Prevents the cell division inhibition by proteins MinC and MinD at internal division sites while permitting inhibition at polar sites. This ensures cell division at the proper site by restricting the formation of a division septum at the midpoint of the long axis of the cell. The sequence is that of Cell division topological specificity factor from Photobacterium profundum (strain SS9).